The primary structure comprises 206 residues: MLPPAIHLSLIPLLCILMRNCLAFKNDATEILYSHVVKPVPAHPSSNSTLNQARNGGRHFSSTGLDRNSRVQVGCRELRSTKYISDGQCTSISPLKELVCAGECLPLPVLPNWIGGGYGTKYWSRRSSQEWRCVNDKTRTQRIQLQCQDGSTRTYKITVVTACKCKRYTRQHNESSHNFESVSPAKPAQHHRERKRASKSSKHSLS.

A signal peptide spans 1 to 23; the sequence is MLPPAIHLSLIPLLCILMRNCLA. The interval 42–62 is disordered; the sequence is AHPSSNSTLNQARNGGRHFSS. The segment covering 44–62 has biased composition (polar residues); sequence PSSNSTLNQARNGGRHFSS. The N-linked (GlcNAc...) asparagine glycan is linked to Asn-47. 4 disulfides stabilise this stretch: Cys-75-Cys-133, Cys-89-Cys-147, Cys-100-Cys-163, and Cys-104-Cys-165. One can recognise a CTCK domain in the interval 75–170; sequence CRELRSTKYI…TACKCKRYTR (96 aa). Asn-173 carries an N-linked (GlcNAc...) asparagine glycan. The interval 176 to 206 is disordered; it reads SHNFESVSPAKPAQHHRERKRASKSSKHSLS. Positions 188 to 206 are enriched in basic residues; it reads AQHHRERKRASKSSKHSLS.

This sequence belongs to the sclerostin family. In terms of assembly, interacts with BMP2, BMP4, BMP6 and BMP7 with high affinity. As to expression, highly expressed in kidney at renal collecting ducts level and weakly in brain.

It localises to the secreted. Its function is as follows. May be involved in the onset of endometrial receptivity for implantation/sensitization for the decidual cell reaction. Enhances Wnt signaling and inhibits TGF-beta signaling. Directly antagonizes activity of BMP2, BMP4, BMP6 and BMP7 in a dose-dependent manner. This Mus musculus (Mouse) protein is Sclerostin domain-containing protein 1 (Sostdc1).